Consider the following 142-residue polypeptide: Small ribosomal subunit protein bS16 (142 aa).

Positions 101–142 (RPSFDALGGDDAGKGEAITQKKKAEKKDEAAAESSSSESTEA) are disordered. A compositionally biased stretch (low complexity) spans 132-142 (AESSSSESTEA).

This sequence belongs to the bacterial ribosomal protein bS16 family.

In Streptomyces avermitilis (strain ATCC 31267 / DSM 46492 / JCM 5070 / NBRC 14893 / NCIMB 12804 / NRRL 8165 / MA-4680), this protein is Small ribosomal subunit protein bS16.